We begin with the raw amino-acid sequence, 66 residues long: Large ribosomal subunit protein uL29 (66 aa).

This sequence belongs to the universal ribosomal protein uL29 family.

The polypeptide is Large ribosomal subunit protein uL29 (Mesorhizobium japonicum (strain LMG 29417 / CECT 9101 / MAFF 303099) (Mesorhizobium loti (strain MAFF 303099))).